Reading from the N-terminus, the 258-residue chain is Dihydroorotate dehydrogenase B (NAD(+)), electron transfer subunit (258 aa).

The 101-residue stretch at methionine 1 to proline 101 folds into the FAD-binding FR-type domain. Residues arginine 52–serine 55, isoleucine 69–arginine 71, and glycine 76–threonine 77 contribute to the FAD site. [2Fe-2S] cluster contacts are provided by cysteine 220, cysteine 225, cysteine 228, and cysteine 243.

The protein belongs to the PyrK family. In terms of assembly, heterotetramer of 2 PyrK and 2 PyrD type B subunits. The cofactor is [2Fe-2S] cluster. FAD serves as cofactor.

Its pathway is pyrimidine metabolism; UMP biosynthesis via de novo pathway; orotate from (S)-dihydroorotate (NAD(+) route): step 1/1. Its function is as follows. Responsible for channeling the electrons from the oxidation of dihydroorotate from the FMN redox center in the PyrD type B subunit to the ultimate electron acceptor NAD(+). The protein is Dihydroorotate dehydrogenase B (NAD(+)), electron transfer subunit of Bacillus pumilus (strain SAFR-032).